The primary structure comprises 15639 residues: FR901469 synthetase (15639 aa).

The 77-residue stretch at 5–81 (HTSDGLRKLL…DLVDKIIEQQ (77 aa)) folds into the Carrier 1 domain. Serine 42 is subject to O-(pantetheine 4'-phosphoryl)serine. Positions 82–94 (LEEEEEDDDSLDN) are enriched in acidic residues. Residues 82 to 105 (LEEEEEDDDSLDNESERDHSQKDL) form a disordered region. The segment at 140–553 (PCLSMQEGCL…RDFLPLTEDD (414 aa)) is condensation 1. The adenylation 1 stretch occupies residues 579 to 971 (TISKQPDAVA…LGRRDTQVKI (393 aa)). A Carrier 2 domain is found at 1108-1184 (TPATAIEKEL…ELALVARSTT (77 aa)). Serine 1145 carries the O-(pantetheine 4'-phosphoryl)serine modification. Positions 1219–1626 (RSSNRFNQSV…TITHLVKRLA (408 aa)) are epimerase 1. Positions 1667 to 2097 (EDVLPCTPIQ…LGNLSLLTNN (431 aa)) are condensation 2. The segment at 2122-2518 (QEAAKEYTNA…GRRDNQIKIR (397 aa)) is adenylation 2. One can recognise a Carrier 3 domain in the interval 2654–2730 (VPATALEKQL…ELALKAKSTT (77 aa)). Serine 2691 carries the post-translational modification O-(pantetheine 4'-phosphoryl)serine. Residues 2761-3176 (VSAGEHRYNQ…TELLHRLEQM (416 aa)) are epimerase 2. Residues 3215–3640 (QDIYPCSPTQ…DDLIMMSPED (426 aa)) form a condensation 3 region. Residues 3669–4059 (TQPHAPAVAA…MGRIDSQIKI (391 aa)) are adenylation 3. A Carrier 4 domain is found at 4193–4269 (PPSNDAERMV…QLAAIVTQRG (77 aa)). O-(pantetheine 4'-phosphoryl)serine is present on serine 4230. Positions 4316 to 4714 (EDVYPCTPLQ…ILAHGTGLEE (399 aa)) are condensation 4. Residues 4756–5149 (TEAASTRPDA…GRLDTQAKLR (394 aa)) are adenylation 4. The Carrier 5 domain occupies 5284 to 5360 (EPATIMERQL…DLASHIDHHT (77 aa)). Residue serine 5321 is modified to O-(pantetheine 4'-phosphoryl)serine. The interval 5402 to 5802 (EDIYPCTPLQ…TVFAQLCDSS (401 aa)) is condensation 5. The tract at residues 5847–6238 (KYPNEPAVHA…LGRRDSQMKV (392 aa)) is adenylation 5. A Carrier 6 domain is found at 6375–6451 (QPSTTAEIKL…DMAKIVEEHV (77 aa)). An O-(pantetheine 4'-phosphoryl)serine modification is found at serine 6412. Residues 6494–6889 (EDVYPATPLQ…RFAKVYQQLS (396 aa)) form a condensation 6 region. The tract at residues 6952–7335 (WDGSMTYAEL…GRRDTQIKIR (384 aa)) is adenylation 6. The Carrier 7 domain maps to 7473-7546 (TAMEEQLRTV…QLALLASTDE (74 aa)). Serine 7507 carries the post-translational modification O-(pantetheine 4'-phosphoryl)serine. The epimerase 3 stretch occupies residues 7580–7992 (MGENRYNQSV…SKTLEELTTQ (413 aa)). The condensation 7 stretch occupies residues 8034–8459 (EDVFPASPMQ…QRMRNISLAS (426 aa)). Residues 8486 to 8882 (QKSVHARPDA…GRRDTQVKIR (397 aa)) are adenylation 7. The region spanning 9015-9091 (QPATDAERQL…DLAKTIQDSE (77 aa)) is the Carrier 8 domain. O-(pantetheine 4'-phosphoryl)serine is present on serine 9052. Residues 9136–9535 (EDVYPCTPLQ…FAAIFRQLCD (400 aa)) are condensation 8. Positions 9583 to 9974 (KNPHAIAVNA…GRRDNQMKIR (392 aa)) are adenylation 8. One can recognise a Carrier 9 domain in the interval 10110–10186 (EPATPMEMQL…GLAALIQKQI (77 aa)). Serine 10147 bears the O-(pantetheine 4'-phosphoryl)serine mark. Residues 10186–10208 (IDEEEEYDDSEEEEEDDEEEVRE) form a disordered region. Positions 10187 to 10206 (DEEEEYDDSEEEEEDDEEEV) are enriched in acidic residues. Residues 10240 to 10662 (VEDVYPCTPL…VLSETDKTKI (423 aa)) form a condensation 9 region. Residues 10683 to 11082 (KQAIERPNAP…GRRDTQIKIR (400 aa)) form an adenylation 9 region. One can recognise a Carrier 10 domain in the interval 11217 to 11293 (EPATGMERHL…DLARETESQG (77 aa)). Serine 11254 carries the post-translational modification O-(pantetheine 4'-phosphoryl)serine. A condensation 10 region spans residues 11329–11725 (EDVYPCTPLQ…ETIFQQLSSV (397 aa)). The segment at 11770-12165 (FKRTADKQPE…GRRDTQIKVR (396 aa)) is adenylation 10. Positions 12298–12374 (EPSTEMERRI…DLAAAVQGRI (77 aa)) constitute a Carrier 11 domain. Serine 12335 is subject to O-(pantetheine 4'-phosphoryl)serine. The interval 12418 to 12830 (EDVYPATPLQ…IQDIEMVSEQ (413 aa)) is condensation 11. The interval 12861–13249 (SRADEIAICA…GRRDTQIKIR (389 aa)) is adenylation 11. In terms of domain architecture, Carrier 12 spans 13383–13459 (MPGTVQEEQL…QLGQKVKEAV (77 aa)). Serine 13420 bears the O-(pantetheine 4'-phosphoryl)serine mark. Residues 13476–13901 (APIQQMFFEQ…LKDMTSTLLQ (426 aa)) form an epimerase 4 region. Residues 13940 to 14369 (EDILPCSPIQ…SIVGEHDLQQ (430 aa)) form a condensation 12 region. Positions 14390–14789 (RDAAHRTPDA…GRGDGQIKIR (400 aa)) are adenylation 12. One can recognise a Carrier 13 domain in the interval 14916–14992 (LPASADEGAL…DMASVASAAR (77 aa)). Position 14953 is an O-(pantetheine 4'-phosphoryl)serine (serine 14953). Residues 15062-15433 (QHAVDLAALK…DIMVRLASQQ (372 aa)) are condensation 13. 2 disordered regions span residues 15434 to 15511 (EGTV…ENRQ) and 15617 to 15639 (VQTN…KGHI). The segment covering 15455 to 15472 (NGTNGSNGDGTDAANGIG) has biased composition (low complexity). The span at 15482 to 15494 (AVEKSSGDAEVEK) shows a compositional bias: basic and acidic residues. The segment covering 15495 to 15511 (VSTNGHADNNTSAENRQ) has biased composition (polar residues).

Belongs to the NRP synthetase family.

It participates in antifungal biosynthesis. Its function is as follows. Nonribosomal peptide synthetase; part of the gene cluster that mediates the biosynthesis of the antifungal antibiotic FR901469, an inhibitor of beta-1,3-glucansynthase, exerting antifungal activity against the pathogenes Candida albicans and Aspergillus fumigatus. FR901469 is a cyclic depsipeptide containing 12 amino acid residues and a fatty acid chain. The NRPS frbI contains 12 modules responsible for the formation of the depsipeptide backbone which is denoted as Acyl-Thr-Ala-Tyr-Val-4OHPro-Thr-Thr-3OHPro-threo3OHGln-Gly-Thr-Orn-OH (C71H116N14O23). The PKS frbB is probably involved in the production of the hydrocarbon chain, and the acyl-CoA ligase frbC might be involved in the transport of the chain to the peptide ptoduct of frbI. Because FR901469 contains 3 hydroxylated amino acid residues, the 3 oxygenases frbA, frbH, and frbJ might be participating in amino acid hydroxylation. As no thioesterase domains were detected in frbI or frbB, the thioesterases frbD and frbE may instead release and cyclize the products of the NRPS and PKS, respectively. This is FR901469 synthetase from Dothideomycetidae sp. (strain 11243) (Fungal sp. (strain No.11243)).